A 1342-amino-acid polypeptide reads, in one-letter code: MVYSYTEKKRIRKDFGKRPQVLDVPYLLSIQLDSFQKFIEQDPEGQYGLEAAFRSVFPIQSYSGNSELQYVSYRLGEPVFDVQECQIRGVTYSAPLRVKLRLVIYEREAPEGTVKDIKEQEVYMGEIPLMTDNGTFVINGTERVIVSQLHRSPGVFFDSDKGKTHSSGKVLYNARIIPYRGSWLDFEFDPKDNLFVRIDRRRKLPATIILRALNYTTEQILDLFFEKVVFEIRDNKLQMELIPERLRGETASFDIEANGKVYVEKGRRITARHIRQLEKDDIKHIEVPVEYIAGKVVSKDYVDESTGELICAANMELSLDLLAKLSQSGHKRIETLFTNDLDHGPYISETVRVDPTNDRLSALVEIYRMMRPGEPPTREAAESLFENLFFSEDRYDLSAVGRMKFNRSLLRDEIEGSGILSKDDIIDVMKKLIDIRNGKGEVDDIDHLGNRRIRSVGEMAENQFRVGLVRVERAVKERLSLGDLDTLMPQDMINAKPISAAVKEFFGSSQLSQFMDQNNPLSEITHKRRISALGPGGLTRERAGFEVRDVHPTHYGRVCPIETPEGPNIGLINSLSVYAQTNEYGFLETPYRRVVDGVVTDEIHYLSAIEEGNYVIAQANSNLDDEGHFVEDLVTCRSKGESSLFSRDQVDYMDVSTQQVVSVGASLIPFLEHDDANRALMGANMQRQAVPTLRADKPLVGTGMERAVAVDSGVTAVAKRGGTVQYVDASRIVIKVNEDEMYPGEAGIDIYNLTKYTRSNQNTCINQMPCVSLGEPVERGDVLADGPSTDLGELALGQNMRVAFMPWNGYNFEDSILVSERVVQEDRFTTIHIQELACVSRDTKLGPEEITADIPNVGEAALSKLDESGIVYIGAEVTGGDILVGKVTPKGETQLTPEEKLLRAIFGEKASDVKDSSLRVPNGVSGTVIDVQVFTRDGVEKDKRALEIEEMQLKQAKKDLSEELQILEAGLFSRIRAVLVSGGVEAEKLDKLPRDRWLELGLTDEEKQNQLEQLAEQYDELKHEFEKKLEAKRRKITQGDDLAPGVLKIVKVYLAVKRRIQPGDKMAGRHGNKGVISKINPIEDMPYDENGTPVDIVLNPLGVPSRMNIGQILETHLGMAAKGIGDKINAMLKQQQEVAKLREFIQRAYDLGADVRQKVDLSTFSDDEVLRLAENLRKGMPIATPVFDGAKEAEIKELLKLGDLPTSGQITLFDGRTGEQFERPVTVGYMYMLKLNHLVDDKMHARSTGSYSLVTQQPLGGKAQFGGQRFGEMEVWALEAYGAAYTLQEMLTVKSDDVNGRTKMYKNIVDGNHQMEPGMPESFNVLLKEIRSLGINIELEDE.

Belongs to the RNA polymerase beta chain family. In terms of assembly, the RNAP catalytic core consists of 2 alpha, 1 beta, 1 beta' and 1 omega subunit. When a sigma factor is associated with the core the holoenzyme is formed, which can initiate transcription.

The catalysed reaction is RNA(n) + a ribonucleoside 5'-triphosphate = RNA(n+1) + diphosphate. In terms of biological role, DNA-dependent RNA polymerase catalyzes the transcription of DNA into RNA using the four ribonucleoside triphosphates as substrates. In Salmonella agona (strain SL483), this protein is DNA-directed RNA polymerase subunit beta.